A 1766-amino-acid polypeptide reads, in one-letter code: DNA-directed RNA polymerase II subunit RPB1-B (1766 aa).

4 residues coordinate Zn(2+): Cys69, Cys72, Cys79, and His82. Mg(2+) is bound by residues Asp487, Asp489, and Asp491. A bridging helix region spans residues 813-825; that stretch reads PHEFFFHTMAGRE. Residues 1660–1766 form a disordered region; it reads HAMSSAAPPS…EFGDEEEEEQ (107 aa). Residues 1706 to 1716 show a composition bias toward basic and acidic residues; the sequence is RGDEPSTHRSD. Positions 1742 to 1756 are enriched in low complexity; sequence PTAKTPQQAAPPTAA.

This sequence belongs to the RNA polymerase beta' chain family. As to quaternary structure, component of the RNA polymerase II (Pol II) complex consisting of 12 subunits.

It localises to the nucleus. The enzyme catalyses RNA(n) + a ribonucleoside 5'-triphosphate = RNA(n+1) + diphosphate. Functionally, DNA-dependent RNA polymerase catalyzes the transcription of DNA into RNA using the four ribonucleoside triphosphates as substrates. Largest and catalytic component of RNA polymerase II which synthesizes mRNA precursors and many functional non-coding RNAs. Forms the polymerase active center together with the second largest subunit. Pol II is the central component of the basal RNA polymerase II transcription machinery. It is composed of mobile elements that move relative to each other. RPB1 is part of the core element with the central large cleft, the clamp element that moves to open and close the cleft and the jaws that are thought to grab the incoming DNA template. At the start of transcription, a single-stranded DNA template strand of the promoter is positioned within the central active site cleft of Pol II. A bridging helix emanates from RPB1 and crosses the cleft near the catalytic site and is thought to promote translocation of Pol II by acting as a ratchet that moves the RNA-DNA hybrid through the active site by switching from straight to bent conformations at each step of nucleotide addition. During transcription elongation, Pol II moves on the template as the transcript elongates. This Trypanosoma brucei brucei protein is DNA-directed RNA polymerase II subunit RPB1-B (TRP5.9).